The following is a 78-amino-acid chain: Defensin beta 136 (78 aa).

The N-terminal stretch at 1-21 (MNLCLSSLLFFLVILLPSGKG) is a signal peptide. 3 disulfides stabilise this stretch: Cys33-Cys60, Cys40-Cys54, and Cys44-Cys61.

This sequence belongs to the beta-defensin family.

Its subcellular location is the secreted. Its function is as follows. Host defense peptide that exhibits antimicrobial and antifungal activity. Exhibits antimicrobial activity against E.coli, S.aureus and C.albicans (in vitro). Has high lipopolysaccharide (LPS)-binding affinity, and may thereby be involved in immunoregulation through LPS neutralization. This is Defensin beta 136 (DEFB136) from Pan troglodytes (Chimpanzee).